A 183-amino-acid chain; its full sequence is Hypoxanthine/guanine phosphoribosyltransferase (183 aa).

This sequence belongs to the purine/pyrimidine phosphoribosyltransferase family. Archaeal HPRT subfamily. As to quaternary structure, homodimer.

Its subcellular location is the cytoplasm. The catalysed reaction is IMP + diphosphate = hypoxanthine + 5-phospho-alpha-D-ribose 1-diphosphate. The enzyme catalyses GMP + diphosphate = guanine + 5-phospho-alpha-D-ribose 1-diphosphate. It participates in purine metabolism; IMP biosynthesis via salvage pathway; IMP from hypoxanthine: step 1/1. Catalyzes a salvage reaction resulting in the formation of IMP that is energically less costly than de novo synthesis. The sequence is that of Hypoxanthine/guanine phosphoribosyltransferase from Methanocaldococcus vulcanius (strain ATCC 700851 / DSM 12094 / M7) (Methanococcus vulcanius).